Consider the following 770-residue polypeptide: Protein PAT1 homolog 1 (770 aa).

A disordered region spans residues 1–42 (MFRYESLEDCPLDEDEDAFQGLGEEDEEIDQFNDDTFGSGAV). The region A; interaction with DDX6/RCK stretch occupies residues 1–84 (MFRYESLEDC…EMDLLGDHEE (84 aa)). Positions 1 to 397 (MFRYESLEDC…HQSSHQDHLR (397 aa)) are involved in nuclear foci localization. Positions 7–33 (LEDCPLDEDEDAFQGLGEEDEEIDQFN) are enriched in acidic residues. The interval 85–388 (NLAERLSKMV…LNGTGDRGGH (304 aa)) is region N; interaction with decapping machinery. Residues 86–95 (LAERLSKMVI) carry the Nuclear export signal motif. Residues 155-195 (PQRPLQGPEDDRDLSERALPRRSTSPIIGSPPVRAVPIGTP) form a disordered region. S177 bears the Phosphoserine mark. T178 carries the phosphothreonine modification. Residues S179 and S184 each carry the phosphoserine modification. T194 is modified (phosphothreonine). Asymmetric dimethylarginine occurs at positions 217, 223, and 263. Residues 223-397 (RYPAPYGERI…HQSSHQDHLR (175 aa)) form an involved in RNA-binding region. At S278 the chain carries Phosphoserine. R284 carries the asymmetric dimethylarginine modification. Disordered regions lie at residues 319-340 (FSAP…GPHL) and 376-396 (HRNL…QDHL). A compositionally biased stretch (pro residues) spans 321 to 337 (APPPATPPPQQHPPGPG). R385 is subject to Omega-N-methylarginine. Residues 385–396 (RGGHQSSHQDHL) are compositionally biased toward basic and acidic residues. The region H stretch occupies residues 389–448 (QSSHQDHLRKDPYANLMLQREKDWVSKIQMMQLQSTDPYLDDFYYQNYFEKLEKLSAAEE). The involved in nuclear speckle localization stretch occupies residues 398-770 (KDPYANLMLQ…TKLQLVQGIR (373 aa)). Residues 449–770 (IQGDGPKKER…TKLQLVQGIR (322 aa)) form a region C region.

It belongs to the PAT1 family. As to quaternary structure, interacts (via region A) with DDX6/RCK. Interacts (via region H and region C) with LSM1 and LSM4. Interacts (via region N) with DCP1A, DCP2, EDC3, EDC4 and XRN1. Interacts with the CCR4-NOT complex. Interacts with the Lsm-containing SMN-Sm protein complex. Interacts with EIF4ENIF1/4E-T.

It is found in the cytoplasm. Its subcellular location is the P-body. The protein resides in the nucleus. It localises to the PML body. The protein localises to the nucleus speckle. RNA-binding protein involved in deadenylation-dependent decapping of mRNAs, leading to the degradation of mRNAs. Acts as a scaffold protein that connects deadenylation and decapping machinery. Required for cytoplasmic mRNA processing body (P-body) assembly. In Mus musculus (Mouse), this protein is Protein PAT1 homolog 1 (Patl1).